A 336-amino-acid chain; its full sequence is Cell division protein ZipA (336 aa).

Residues 1–2 (ME) lie on the Periplasmic side of the membrane. A helical membrane pass occupies residues 3-23 (LHILFFILAGLLIAVLIGFSL). At 24 to 336 (WSARREKSRI…SRQAYLARVS (313 aa)) the chain is on the cytoplasmic side.

This sequence belongs to the ZipA family. In terms of assembly, interacts with FtsZ via their C-terminal domains.

It localises to the cell inner membrane. Essential cell division protein that stabilizes the FtsZ protofilaments by cross-linking them and that serves as a cytoplasmic membrane anchor for the Z ring. Also required for the recruitment to the septal ring of downstream cell division proteins. The polypeptide is Cell division protein ZipA (Actinobacillus pleuropneumoniae serotype 5b (strain L20)).